The chain runs to 268 residues: Protein CDV3 homolog (268 aa).

The segment covering 40–50 (KREVVKPKKPE) has biased composition (basic and acidic residues). Disordered stretches follow at residues 40–145 (KREV…ERVG) and 184–268 (QQAG…DEAS). Positions 51 to 61 (AAAGGVAVVGE) are enriched in low complexity. Residues 76 to 85 (VEEEWKEFEE) are compositionally biased toward acidic residues. Polar residues predominate over residues 98–107 (QLSTITAQES). Residues 123–132 (NYDEDDEDSN) show a composition bias toward acidic residues. A compositionally biased stretch (basic and acidic residues) spans 221-239 (RPEEQRKKKNEPAFEEVRH).

The protein belongs to the CDV3 family.

The sequence is that of Protein CDV3 homolog from Drosophila yakuba (Fruit fly).